A 92-amino-acid chain; its full sequence is Small ribosomal subunit protein bS20 (92 aa).

It belongs to the bacterial ribosomal protein bS20 family.

In terms of biological role, binds directly to 16S ribosomal RNA. In Rickettsia africae (strain ESF-5), this protein is Small ribosomal subunit protein bS20.